Reading from the N-terminus, the 163-residue chain is Leptin (163 aa).

The first 18 residues, Met1–Ala18, serve as a signal peptide directing secretion. Cys113 and Cys163 are oxidised to a cystine.

This sequence belongs to the leptin family. Not exclusively localized in adipose tissue but is also expressed in liver.

The protein resides in the secreted. Its function is as follows. Key player in the regulation of energy balance and body weight control. Once released into the circulation, has central and peripheral effects by binding LEPR, found in many tissues, which results in the activation of several major signaling pathways. In Gallus gallus (Chicken), this protein is Leptin (LEP).